The following is a 338-amino-acid chain: UDP-glucose 4-epimerase (338 aa).

NAD(+) is bound by residues Tyr-16–Ile-17, Ile-37–Thr-42, Asn-59–Leu-60, Phe-81–Thr-85, Thr-126, Tyr-153, Lys-157, and Phe-181. Residues Thr-126 and Tyr-153 each coordinate substrate. The Proton acceptor role is filled by Tyr-153. Substrate is bound by residues Asn-182, Thr-198–Leu-199, Phe-215–Tyr-217, Arg-230, and Arg-294–Asp-297.

This sequence belongs to the NAD(P)-dependent epimerase/dehydratase family. As to quaternary structure, homodimer. Requires NAD(+) as cofactor.

The enzyme catalyses UDP-alpha-D-glucose = UDP-alpha-D-galactose. It participates in carbohydrate metabolism; galactose metabolism. In terms of biological role, involved in the metabolism of galactose. Catalyzes the conversion of UDP-galactose (UDP-Gal) to UDP-glucose (UDP-Glc) through a mechanism involving the transient reduction of NAD. The polypeptide is UDP-glucose 4-epimerase (galE) (Mycoplasma pneumoniae (strain ATCC 29342 / M129 / Subtype 1) (Mycoplasmoides pneumoniae)).